Here is a 679-residue protein sequence, read N- to C-terminus: F-box/LRR-repeat protein 5 (679 aa).

The hemerythrin-like stretch occupies residues M1 to C159. 7 residues coordinate Fe(3+): H15, H57, E58, E61, H80, H126, and E130. Residues R205 to L251 form the F-box domain. LRR repeat units lie at residues E316–Y342, S343–T367, Q368–G395, C396–A426, C565–G595, C596–G623, and C624–Y649. 4 residues coordinate [2Fe-2S] cluster: C650, C664, C674, and C675.

In terms of assembly, part of a SCF (SKP1-cullin-F-box) protein ligase complex. [2Fe-2S] cluster is required as a cofactor. In terms of processing, ubiquitinated upon iron and oxygen depletion, leading to its degradation by the proteasome. Ubiquitination is regulated by the hemerythrin-like region that acts as an oxygen and iron sensor.

The protein localises to the cytoplasm. It localises to the perinuclear region. Its subcellular location is the nucleus. It functions in the pathway protein modification; protein ubiquitination. Functionally, component of some SCF (SKP1-cullin-F-box) protein ligase complex that plays a central role in iron homeostasis by promoting the ubiquitination and subsequent degradation of ireb2/irp2. Upon high iron and oxygen level, it specifically recognizes and binds ireb2/irp2, promoting its ubiquitination and degradation by the proteasome. The protein is F-box/LRR-repeat protein 5 (fbxl5) of Danio rerio (Zebrafish).